A 425-amino-acid polypeptide reads, in one-letter code: Serine--tRNA ligase (425 aa).

An L-serine-binding site is contributed by 230-232 (TAE). ATP is bound at residue 261–263 (RSE). Glu-284 provides a ligand contact to L-serine. 348 to 351 (EISS) contacts ATP. L-serine is bound at residue Ser-383.

The protein belongs to the class-II aminoacyl-tRNA synthetase family. Type-1 seryl-tRNA synthetase subfamily. Homodimer. The tRNA molecule binds across the dimer.

Its subcellular location is the cytoplasm. The enzyme catalyses tRNA(Ser) + L-serine + ATP = L-seryl-tRNA(Ser) + AMP + diphosphate + H(+). The catalysed reaction is tRNA(Sec) + L-serine + ATP = L-seryl-tRNA(Sec) + AMP + diphosphate + H(+). It functions in the pathway aminoacyl-tRNA biosynthesis; selenocysteinyl-tRNA(Sec) biosynthesis; L-seryl-tRNA(Sec) from L-serine and tRNA(Sec): step 1/1. Its function is as follows. Catalyzes the attachment of serine to tRNA(Ser). Is also able to aminoacylate tRNA(Sec) with serine, to form the misacylated tRNA L-seryl-tRNA(Sec), which will be further converted into selenocysteinyl-tRNA(Sec). The sequence is that of Serine--tRNA ligase from Ligilactobacillus salivarius (strain UCC118) (Lactobacillus salivarius).